The sequence spans 92 residues: Acylphosphatase (92 aa).

In terms of domain architecture, Acylphosphatase-like spans 7–92 (KTRCTISGRV…DPAPAEFSVG (86 aa)). Active-site residues include Arg22 and Asn40.

It belongs to the acylphosphatase family.

It carries out the reaction an acyl phosphate + H2O = a carboxylate + phosphate + H(+). The protein is Acylphosphatase (acyP) of Halorhodospira halophila (strain DSM 244 / SL1) (Ectothiorhodospira halophila (strain DSM 244 / SL1)).